A 188-amino-acid polypeptide reads, in one-letter code: MREYKIVVLGSGGVGKSALTVQFVQGIFVEKYDPTIEDSYRKQVEVDGQQCMLEILDTAGTEQFTAMRDLYMKNGQGFVLVYSITAQSTFNDLMDLRDQILRVKDTDEVPMILVGNKCDLEDERVVGKDQGQNLARQFGSAFLETSAKAKINVSEVFYDLVRQINRRYPESGRRQGQSNKQCCSCVIM.

10 to 17 lines the GTP pocket; the sequence is GSGGVGKS. An Effector region motif is present at residues 32–40; sequence YDPTIEDSY. Residues 57–61 and 116–119 contribute to the GTP site; these read DTAGT and NKCD.

Belongs to the small GTPase superfamily. Ras family.

The catalysed reaction is GTP + H2O = GDP + phosphate + H(+). Functionally, required in the hypodermis for proper formation of the cuticle. This is Ras-related protein Rap-1 (rap-1) from Caenorhabditis elegans.